Here is a 418-residue protein sequence, read N- to C-terminus: Bifunctional enzyme IspD/IspF (418 aa).

Residues M1 to F261 form a 2-C-methyl-D-erythritol 4-phosphate cytidylyltransferase region. A 2-C-methyl-D-erythritol 2,4-cyclodiphosphate synthase region spans residues R262–I418. A divalent metal cation contacts are provided by D268 and H270. 4-CDP-2-C-methyl-D-erythritol 2-phosphate contacts are provided by residues D268 to H270 and H294 to S295. H302 is a binding site for a divalent metal cation. Residues D316 to G318 and F321 to D325 each bind 4-CDP-2-C-methyl-D-erythritol 2-phosphate.

This sequence in the N-terminal section; belongs to the IspD/TarI cytidylyltransferase family. IspD subfamily. It in the C-terminal section; belongs to the IspF family. A divalent metal cation serves as cofactor.

The catalysed reaction is 2-C-methyl-D-erythritol 4-phosphate + CTP + H(+) = 4-CDP-2-C-methyl-D-erythritol + diphosphate. It catalyses the reaction 4-CDP-2-C-methyl-D-erythritol 2-phosphate = 2-C-methyl-D-erythritol 2,4-cyclic diphosphate + CMP. Its pathway is isoprenoid biosynthesis; isopentenyl diphosphate biosynthesis via DXP pathway; isopentenyl diphosphate from 1-deoxy-D-xylulose 5-phosphate: step 2/6. It participates in isoprenoid biosynthesis; isopentenyl diphosphate biosynthesis via DXP pathway; isopentenyl diphosphate from 1-deoxy-D-xylulose 5-phosphate: step 4/6. Functionally, bifunctional enzyme that catalyzes the formation of 4-diphosphocytidyl-2-C-methyl-D-erythritol from CTP and 2-C-methyl-D-erythritol 4-phosphate (MEP) (IspD), and catalyzes the conversion of 4-diphosphocytidyl-2-C-methyl-D-erythritol 2-phosphate (CDP-ME2P) to 2-C-methyl-D-erythritol 2,4-cyclodiphosphate (ME-CPP) with a corresponding release of cytidine 5-monophosphate (CMP) (IspF). The protein is Bifunctional enzyme IspD/IspF of Albidiferax ferrireducens (strain ATCC BAA-621 / DSM 15236 / T118) (Rhodoferax ferrireducens).